We begin with the raw amino-acid sequence, 336 residues long: Probable tRNA N6-adenosine threonylcarbamoyltransferase (336 aa).

Residues histidine 110, histidine 114, and tyrosine 131 each contribute to the a divalent metal cation site. Residues 131 to 135 (YVSGG), aspartate 163, glycine 178, glutamate 182, and asparagine 267 contribute to the substrate site. Position 295 (aspartate 295) interacts with a divalent metal cation.

This sequence belongs to the KAE1 / TsaD family. In terms of assembly, component of the EKC/KEOPS complex; the whole complex dimerizes. A divalent metal cation is required as a cofactor.

The protein resides in the cytoplasm. It localises to the nucleus. It carries out the reaction L-threonylcarbamoyladenylate + adenosine(37) in tRNA = N(6)-L-threonylcarbamoyladenosine(37) in tRNA + AMP + H(+). Its function is as follows. Component of the EKC/KEOPS complex that is required for the formation of a threonylcarbamoyl group on adenosine at position 37 (t(6)A37) in tRNAs that read codons beginning with adenine. The complex is probably involved in the transfer of the threonylcarbamoyl moiety of threonylcarbamoyl-AMP (TC-AMP) to the N6 group of A37. Osgep likely plays a direct catalytic role in this reaction, but requires other protein(s) of the complex to fulfill this activity. The sequence is that of Probable tRNA N6-adenosine threonylcarbamoyltransferase from Dictyostelium discoideum (Social amoeba).